The following is a 478-amino-acid chain: Shikimate biosynthesis protein AroDE (478 aa).

Residues 1–208 form a 3-dehydroquinate dehydratase region; sequence MLCTTISGPS…LKHHYFYNFA (208 aa). Residues Ser21, 29 to 31, and 55 to 57 contribute to the 3-dehydroquinate site; these read EMR and AWK. His110 functions as the Proton donor/acceptor; for 3-dehydroquinate dehydratase activity in the catalytic mechanism. Lys133 serves as the catalytic Schiff-base intermediate with substrate; for 3-dehydroquinate dehydratase activity. 3-dehydroquinate-binding residues include Arg171 and Gln196. Residues 209-478 are shikimate 5-dehydrogenase; the sequence is SLSAQSPICA…VLASLFSIAP (270 aa). 226–228 provides a ligand contact to shikimate; that stretch reads SIG. Lys277 (proton acceptor; for shikimate dehydrogenase activity) is an active-site residue. Residues Asn298 and Asp313 each coordinate shikimate. NADP(+) is bound by residues 337–341, 360–362, and Gly435; these read GAGGA and NRT. A shikimate-binding site is contributed by Gln442.

This sequence in the N-terminal section; belongs to the type-I 3-dehydroquinase family. In the C-terminal section; belongs to the shikimate dehydrogenase family.

The catalysed reaction is 3-dehydroquinate = 3-dehydroshikimate + H2O. It carries out the reaction shikimate + NADP(+) = 3-dehydroshikimate + NADPH + H(+). It functions in the pathway metabolic intermediate biosynthesis; chorismate biosynthesis; chorismate from D-erythrose 4-phosphate and phosphoenolpyruvate: step 3/7. Its pathway is metabolic intermediate biosynthesis; chorismate biosynthesis; chorismate from D-erythrose 4-phosphate and phosphoenolpyruvate: step 4/7. Bifunctional enzyme that catalyzes two sequential steps of the aromatic amino acids biosynthetic pathway. In the first reaction, the AroD domain catalyzes the cis-dehydration of 3-dehydroquinate (DHQ) and introduces the first double bond of the aromatic ring to yield 3-dehydroshikimate; in the second reaction, the AroE domain catalyzes the reversible NADPH linked reduction of 3-dehydroshikimate (DHSA) to yield shikimate (SA). The polypeptide is Shikimate biosynthesis protein AroDE (Chlamydia trachomatis serovar D (strain ATCC VR-885 / DSM 19411 / UW-3/Cx)).